The following is a 224-amino-acid chain: Phosphoglycolate phosphatase (224 aa).

D11 (nucleophile) is an active-site residue. The Mg(2+) site is built by D11, D13, and D177.

It belongs to the HAD-like hydrolase superfamily. CbbY/CbbZ/Gph/YieH family. It depends on Mg(2+) as a cofactor.

It carries out the reaction 2-phosphoglycolate + H2O = glycolate + phosphate. It participates in organic acid metabolism; glycolate biosynthesis; glycolate from 2-phosphoglycolate: step 1/1. Functionally, specifically catalyzes the dephosphorylation of 2-phosphoglycolate. Is involved in the dissimilation of the intracellular 2-phosphoglycolate formed during the DNA repair of 3'-phosphoglycolate ends, a major class of DNA lesions induced by oxidative stress. In Haemophilus influenzae (strain ATCC 51907 / DSM 11121 / KW20 / Rd), this protein is Phosphoglycolate phosphatase.